The sequence spans 315 residues: Probable cell division protein WhiA (315 aa).

Residues 280-313 constitute a DNA-binding region (H-T-H motif); sequence SLKELGDLLDPPLSKSGVAYRMRKLEESVKEILQ.

This sequence belongs to the WhiA family.

Involved in cell division and chromosome segregation. In Syntrophomonas wolfei subsp. wolfei (strain DSM 2245B / Goettingen), this protein is Probable cell division protein WhiA.